The following is a 165-amino-acid chain: MAAESSFDIVSKIDRQEVDNAVNQASRELSQRFDFKGTGSTISWAGEHAVEIKSNSEERAKAALDVFKSKLVKRGVSLKILDVPETPKVSGKEYRLPITLKEGISPENAKKIAKMIREEFPKGVKAQIQGDELRVSSKKKDDLQAVIAMLKNSDLDVALQFVNFR.

Belongs to the YajQ family.

In terms of biological role, nucleotide-binding protein. The chain is Nucleotide-binding protein Tfu_2672 from Thermobifida fusca (strain YX).